Consider the following 328-residue polypeptide: Carbonic anhydrase-related protein 10 (328 aa).

The 271-residue stretch at 31–301 (GWWAYKEVVQ…LNNRCIRTNI (271 aa)) folds into the Alpha-carbonic anhydrase domain.

It belongs to the alpha-carbonic anhydrase family.

Does not have a catalytic activity. In Macaca fascicularis (Crab-eating macaque), this protein is Carbonic anhydrase-related protein 10 (CA10).